Reading from the N-terminus, the 421-residue chain is UDP-N-acetylglucosamine 1-carboxyvinyltransferase (421 aa).

22–23 (KN) provides a ligand contact to phosphoenolpyruvate. Arg-93 is a UDP-N-acetyl-alpha-D-glucosamine binding site. The Proton donor role is filled by Cys-117. The residue at position 117 (Cys-117) is a 2-(S-cysteinyl)pyruvic acid O-phosphothioketal. Residues 122–126 (RPVDL), Asp-308, and Ile-330 contribute to the UDP-N-acetyl-alpha-D-glucosamine site.

Belongs to the EPSP synthase family. MurA subfamily.

It localises to the cytoplasm. The catalysed reaction is phosphoenolpyruvate + UDP-N-acetyl-alpha-D-glucosamine = UDP-N-acetyl-3-O-(1-carboxyvinyl)-alpha-D-glucosamine + phosphate. Its pathway is cell wall biogenesis; peptidoglycan biosynthesis. In terms of biological role, cell wall formation. Adds enolpyruvyl to UDP-N-acetylglucosamine. In Pseudomonas fluorescens (strain Pf0-1), this protein is UDP-N-acetylglucosamine 1-carboxyvinyltransferase.